We begin with the raw amino-acid sequence, 237 residues long: MTPQAFYLALEQAGFALTNHQKEQFDTYFKLLVDWNRKINLTAITEENEVYLKHFYDSVAPLLQGYIPNEPLRLLDIGAGAGFPSIPMKIMFPKLDVTIIDSLNKRIHFLQLLAKELGLEGVHFYHGRAEDFGQDKQFRGQFDLVTARAVARMQILSELTIPFLKIKGKLIALKAQAADQELEEAKKALQLLFAKVLDHQPYQLPNGDGRYITLVEKKKETPNKYPRKAGIPNKKPL.

Residues G78, F83, 129-130, and R148 each bind S-adenosyl-L-methionine; that span reads AE.

This sequence belongs to the methyltransferase superfamily. RNA methyltransferase RsmG family.

It localises to the cytoplasm. In terms of biological role, specifically methylates the N7 position of a guanine in 16S rRNA. This chain is Ribosomal RNA small subunit methyltransferase G, found in Streptococcus equi subsp. zooepidemicus (strain MGCS10565).